Reading from the N-terminus, the 1462-residue chain is Copper-transporting ATPase 2 (1462 aa).

The segment at 1–23 is disordered; sequence MDPRKNLASVGTMPEQERQVTAK. The Cytoplasmic segment spans residues 1 to 655; that stretch reads MDPRKNLASV…KTEIKQWKKS (655 aa). HMA domains follow at residues 68–134, 153–219, 267–333, and 361–427; these read ATDV…FEAS, AVVK…FEAA, ATLP…PGHF, and RTAV…FEVS. Cu(+)-binding residues include Cys-79, Cys-82, Cys-164, Cys-167, Cys-278, and Cys-281. Residues 333–361 form a disordered region; the sequence is FKVSLPDGVEENEPQSGSSQRHQEQGPGR. Residue Cys-372 participates in Cu(+) binding. The interval 460 to 487 is disordered; sequence KMAPDTRGLPTHQGPGHSSETPSSPGAT. Residues 475–487 show a composition bias toward polar residues; sequence GHSSETPSSPGAT. A phosphoserine mark is found at Ser-478 and Ser-483. HMA domains follow at residues 490–556 and 566–632; these read QKCF…FEAS and GDIE…FHAS. Positions 501, 504, 577, and 580 each coordinate Cu(+). A helical transmembrane segment spans residues 656-677; it reads FLCSLVFGIPVMGLMVYMLIPS. The Extracellular segment spans residues 678–699; that stretch reads STPQETMVLDHNIIPGLSVLNL. A helical membrane pass occupies residues 700 to 719; sequence IFFILCTFVQFLGGWYFYVQ. Over 720-726 the chain is Cytoplasmic; sequence AYKSLRH. The chain crosses the membrane as a helical span at residues 727 to 747; it reads RSANMDVLIVLATTIAYAYSL. At 748–766 the chain is on the extracellular side; it reads VILVVAVAEKAEKSPVTFF. Residues 767–787 traverse the membrane as a helical segment; it reads DTPPMLFVFIALGRWLEHVAK. Residues 788 to 921 lie on the Cytoplasmic side of the membrane; sequence SKTSEALAKL…KAPIQQLADR (134 aa). The helical transmembrane segment at 922–944 threads the bilayer; that stretch reads FSGYFVPFIIIISTLTLVVWIVI. Residues 945–974 lie on the Extracellular side of the membrane; it reads GFVDFGVVQKYFPSPSKHISQTEVIIRFAF. The helical transmembrane segment at 975-996 threads the bilayer; that stretch reads QTSITVLCIACPCSLGLATPTA. Over 997–1319 the chain is Cytoplasmic; the sequence is VMVGTGVAAQ…LSKRTVRRIR (323 aa). Asp-1029 (4-aspartylphosphate intermediate) is an active-site residue. Positions 1264 and 1268 each coordinate Mg(2+). Residues 1320 to 1337 form a helical membrane-spanning segment; the sequence is VNLVLALIYNMVGIPIAA. The Extracellular segment spans residues 1338–1348; it reads GVFMPIGIVLQ. The chain crosses the membrane as a helical span at residues 1349 to 1368; that stretch reads PWMGSAAMAASSVSVVLSSL. Over 1369–1462 the chain is Cytoplasmic; the sequence is QLKCYRKPDL…LSDRDEEQCI (94 aa). Residues Ser-1395 and Ser-1454 each carry the phosphoserine modification.

It belongs to the cation transport ATPase (P-type) (TC 3.A.3) family. Type IB subfamily. In terms of assembly, monomer. Interacts with COMMD1/MURR1. Interacts with DCTN4, in a copper-dependent manner. Interacts with ATOX1. Interacts (via C-terminus) with ZBTB16/PLZF. As to expression, detected in liver and kidney.

Its subcellular location is the golgi apparatus. It localises to the trans-Golgi network membrane. The protein resides in the late endosome. The enzyme catalyses Cu(+)(in) + ATP + H2O = Cu(+)(out) + ADP + phosphate + H(+). Its function is as follows. Copper ion transmembrane transporter involved in the export of copper out of the cells, such as the efflux of hepatic copper into the bile. The polypeptide is Copper-transporting ATPase 2 (Atp7b) (Mus musculus (Mouse)).